Here is a 293-residue protein sequence, read N- to C-terminus: Small ribosomal subunit protein uS2 (293 aa).

Residues 265–293 (DGGDWAASSAPAPGGENWAEAQPAEGAKW) are disordered.

It belongs to the universal ribosomal protein uS2 family. As to quaternary structure, component of the small ribosomal subunit. Mature ribosomes consist of a small (40S) and a large (60S) subunit. The 40S subunit contains about 33 different proteins and 1 molecule of RNA (18S). The 60S subunit contains about 49 different proteins and 3 molecules of RNA (25S, 5.8S and 5S). Interacts with rps21.

It localises to the cytoplasm. Required for the assembly and/or stability of the 40S ribosomal subunit. Required for the processing of the 20S rRNA-precursor to mature 18S rRNA in a late step of the maturation of 40S ribosomal subunits. The chain is Small ribosomal subunit protein uS2 (rps0) from Emericella nidulans (strain FGSC A4 / ATCC 38163 / CBS 112.46 / NRRL 194 / M139) (Aspergillus nidulans).